The sequence spans 90 residues: Trp-8 progonadoliberin (90 aa).

An N-terminal signal peptide occupies residues 1-24 (MSRHVTVVLLLAVVLLLSSHMSHG). Position 25 is a pyrrolidone carboxylic acid (Q25). G34 carries the post-translational modification Glycine amide.

Belongs to the GnRH family. Expressed in forebrain but not in testis, ovary, kidney and liver.

It is found in the secreted. In terms of biological role, stimulates the secretion of gonadotropins. The protein is Trp-8 progonadoliberin of Rana dybowskii (Dybovsky's frog).